The chain runs to 415 residues: Serine hydroxymethyltransferase (415 aa).

Residues L117 and 121-123 (GHL) contribute to the (6S)-5,6,7,8-tetrahydrofolate site. Residue K226 is modified to N6-(pyridoxal phosphate)lysine. E241 provides a ligand contact to (6S)-5,6,7,8-tetrahydrofolate.

It belongs to the SHMT family. Homodimer. Pyridoxal 5'-phosphate is required as a cofactor.

Its subcellular location is the cytoplasm. The catalysed reaction is (6R)-5,10-methylene-5,6,7,8-tetrahydrofolate + glycine + H2O = (6S)-5,6,7,8-tetrahydrofolate + L-serine. It functions in the pathway one-carbon metabolism; tetrahydrofolate interconversion. It participates in amino-acid biosynthesis; glycine biosynthesis; glycine from L-serine: step 1/1. Catalyzes the reversible interconversion of serine and glycine with tetrahydrofolate (THF) serving as the one-carbon carrier. This reaction serves as the major source of one-carbon groups required for the biosynthesis of purines, thymidylate, methionine, and other important biomolecules. Also exhibits THF-independent aldolase activity toward beta-hydroxyamino acids, producing glycine and aldehydes, via a retro-aldol mechanism. This Bacillus licheniformis (strain ATCC 14580 / DSM 13 / JCM 2505 / CCUG 7422 / NBRC 12200 / NCIMB 9375 / NCTC 10341 / NRRL NRS-1264 / Gibson 46) protein is Serine hydroxymethyltransferase.